The following is a 473-amino-acid chain: Suppressor of SWI4 1 homolog (473 aa).

Positions 29-292 (PHSFVFTRGC…LIKVQEGVGE (264 aa)) constitute a Brix domain. A phosphoserine mark is found at Ser238 and Ser240. The disordered stretch occupies residues 323-473 (AQRQAQQAQN…GRGRPGKRVA (151 aa)). Positions 324–334 (QRQAQQAQNVQ) are enriched in low complexity. Basic and acidic residues predominate over residues 335–352 (RKQEQREAHRKKSLEGMK). Ser359 bears the Phosphoserine mark. Over residues 375 to 388 (LGEDDDEQEDDDIE) the composition is skewed to acidic residues. The span at 409-421 (KRLAKSPGRKRKR) shows a compositional bias: basic residues. The segment covering 422–443 (WEMDRGRGRLCDQKFPKTKDKS) has biased composition (basic and acidic residues). Lys438 is subject to N6-acetyllysine. Residues 462 to 473 (GRGRGRPGKRVA) are compositionally biased toward basic residues.

In terms of tissue distribution, widely expressed.

It localises to the nucleus. The protein resides in the nucleolus. In terms of biological role, may have a role in cell growth. The polypeptide is Suppressor of SWI4 1 homolog (PPAN) (Homo sapiens (Human)).